The chain runs to 193 residues: Dual-action ribosomal maturation protein DarP (193 aa).

A compositionally biased stretch (basic and acidic residues) spans 1–10 (MRGRDEDTGE). 2 disordered regions span residues 1–20 (MRGR…SQQR) and 171–193 (QEQG…EDDE). Acidic residues predominate over residues 181-193 (GLEDGESALEDDE).

Belongs to the DarP family.

It is found in the cytoplasm. In terms of biological role, member of a network of 50S ribosomal subunit biogenesis factors which assembles along the 30S-50S interface, preventing incorrect 23S rRNA structures from forming. Promotes peptidyl transferase center (PTC) maturation. The chain is Dual-action ribosomal maturation protein DarP from Xanthomonas oryzae pv. oryzae (strain KACC10331 / KXO85).